The sequence spans 81 residues: Conotoxin Eb11.3 (81 aa).

An N-terminal signal peptide occupies residues 1–23 (MMFRLTSVWCLLVIVLLNSAVDG). Cystine bridges form between C27–C41, C34–C48, C40–C56, and C47–C62. L69 carries the leucine amide modification. Residues 73–81 (AQYKRFFRR) constitute a propeptide that is removed on maturation.

Belongs to the conotoxin I2 superfamily. As to expression, expressed by the venom duct.

Its subcellular location is the secreted. This chain is Conotoxin Eb11.3, found in Conus eburneus (Ivory cone).